Here is a 294-residue protein sequence, read N- to C-terminus: Cytidine deaminase (294 aa).

CMP/dCMP-type deaminase domains are found at residues 48–168 and 186–294; these read DEDA…FGPK and LTGD…VLLG. 89-91 is a substrate binding site; it reads NME. A Zn(2+)-binding site is contributed by histidine 102. Glutamate 104 functions as the Proton donor in the catalytic mechanism. Zn(2+) is bound by residues cysteine 129 and cysteine 132.

This sequence belongs to the cytidine and deoxycytidylate deaminase family. Homodimer. It depends on Zn(2+) as a cofactor.

It carries out the reaction cytidine + H2O + H(+) = uridine + NH4(+). The enzyme catalyses 2'-deoxycytidine + H2O + H(+) = 2'-deoxyuridine + NH4(+). Its function is as follows. This enzyme scavenges exogenous and endogenous cytidine and 2'-deoxycytidine for UMP synthesis. The protein is Cytidine deaminase of Salmonella dublin (strain CT_02021853).